Consider the following 587-residue polypeptide: Glutamine--tRNA ligase (587 aa).

The 'HIGH' region signature appears at 58-68 (PEPNGYLHIGH). ATP contacts are provided by residues 59–61 (EPN) and 65–71 (HIGHAKS). The L-glutamine site is built by Asp-91 and Tyr-240. Residues Thr-259 and 294–295 (RL) each bind ATP. The 'KMSKS' region signature appears at 301-305 (VTSKR).

This sequence belongs to the class-I aminoacyl-tRNA synthetase family. As to quaternary structure, monomer.

Its subcellular location is the cytoplasm. It catalyses the reaction tRNA(Gln) + L-glutamine + ATP = L-glutaminyl-tRNA(Gln) + AMP + diphosphate. The sequence is that of Glutamine--tRNA ligase from Bordetella bronchiseptica (strain ATCC BAA-588 / NCTC 13252 / RB50) (Alcaligenes bronchisepticus).